A 227-amino-acid chain; its full sequence is Cytochrome c oxidase subunit 2 (227 aa).

The Mitochondrial intermembrane portion of the chain corresponds to 1-14 (MAYPFQLGLQDATS). Residues 15–45 (PIMEELLHFHDHTLMIVFLISSLVLYIISLM) form a helical membrane-spanning segment. Over 46-59 (LTTKLTHTSTMDAQ) the chain is Mitochondrial matrix. A helical transmembrane segment spans residues 60–87 (EVETVWTILPAIILILIALLSLRILYMM). Residues 88-227 (DEINNPFLTM…YFETWSALMV (140 aa)) are Mitochondrial intermembrane-facing. Positions 161, 196, 198, 200, 204, and 207 each coordinate Cu cation. Glu-198 serves as a coordination point for Mg(2+). Tyr-218 is modified (phosphotyrosine).

Belongs to the cytochrome c oxidase subunit 2 family. As to quaternary structure, component of the cytochrome c oxidase (complex IV, CIV), a multisubunit enzyme composed of 14 subunits. The complex is composed of a catalytic core of 3 subunits MT-CO1, MT-CO2 and MT-CO3, encoded in the mitochondrial DNA, and 11 supernumerary subunits COX4I, COX5A, COX5B, COX6A, COX6B, COX6C, COX7A, COX7B, COX7C, COX8 and NDUFA4, which are encoded in the nuclear genome. The complex exists as a monomer or a dimer and forms supercomplexes (SCs) in the inner mitochondrial membrane with NADH-ubiquinone oxidoreductase (complex I, CI) and ubiquinol-cytochrome c oxidoreductase (cytochrome b-c1 complex, complex III, CIII), resulting in different assemblies (supercomplex SCI(1)III(2)IV(1) and megacomplex MCI(2)III(2)IV(2)). Found in a complex with TMEM177, COA6, COX18, COX20, SCO1 and SCO2. Interacts with TMEM177 in a COX20-dependent manner. Interacts with COX20. Interacts with COX16. Cu cation is required as a cofactor.

It is found in the mitochondrion inner membrane. It carries out the reaction 4 Fe(II)-[cytochrome c] + O2 + 8 H(+)(in) = 4 Fe(III)-[cytochrome c] + 2 H2O + 4 H(+)(out). Functionally, component of the cytochrome c oxidase, the last enzyme in the mitochondrial electron transport chain which drives oxidative phosphorylation. The respiratory chain contains 3 multisubunit complexes succinate dehydrogenase (complex II, CII), ubiquinol-cytochrome c oxidoreductase (cytochrome b-c1 complex, complex III, CIII) and cytochrome c oxidase (complex IV, CIV), that cooperate to transfer electrons derived from NADH and succinate to molecular oxygen, creating an electrochemical gradient over the inner membrane that drives transmembrane transport and the ATP synthase. Cytochrome c oxidase is the component of the respiratory chain that catalyzes the reduction of oxygen to water. Electrons originating from reduced cytochrome c in the intermembrane space (IMS) are transferred via the dinuclear copper A center (CU(A)) of subunit 2 and heme A of subunit 1 to the active site in subunit 1, a binuclear center (BNC) formed by heme A3 and copper B (CU(B)). The BNC reduces molecular oxygen to 2 water molecules using 4 electrons from cytochrome c in the IMS and 4 protons from the mitochondrial matrix. The polypeptide is Cytochrome c oxidase subunit 2 (MT-CO2) (Nyctereutes procyonoides (Raccoon dog)).